Reading from the N-terminus, the 192-residue chain is MSAAEVIKLVVIGDGAVGKTCLLISYANNRFPEDYIPTVFDNYVVNLTAGDRNIELGLWDTAGQEEYDKLRPLSYANANVFLICFSITNPVSFENVYTKWYPEVMHFCPEVPQILVGTKLDTRDDRGVLDKLQQTGHKPITTEQGNDLARRIKAIKYMECSAKTSQNLKQVFDEAIKSVLFIKKKKSKCIVM.

Position 13–20 (13–20 (GDGAVGKT)) interacts with GTP. The Effector region signature appears at 35-43 (YIPTVFDNY). Residues 60 to 64 (DTAGQ) and 118 to 121 (TKLD) each bind GTP. Cys189 is modified (cysteine methyl ester). Cys189 carries S-geranylgeranyl cysteine lipidation. Residues 190-192 (IVM) constitute a propeptide, removed in mature form.

It belongs to the small GTPase superfamily. Rho family. Interacts with pakB.

It is found in the cell membrane. The polypeptide is Rho-related protein racC (racC) (Dictyostelium discoideum (Social amoeba)).